The chain runs to 385 residues: UPF0496 protein At3g28290 (385 aa).

Residues 138–214 (KDKENDVGKK…IEMEISSRKK (77 aa)) are a coiled coil. The next 2 helical transmembrane spans lie at 217-237 (IISN…SMVL) and 242-262 (VGAG…IGWV). Residues 267 to 294 (ILENKIQAREKQEEALKKAHRIANEMDK) are a coiled coil.

It belongs to the UPF0496 family. As to expression, widely expressed.

It is found in the membrane. The chain is UPF0496 protein At3g28290 from Arabidopsis thaliana (Mouse-ear cress).